The chain runs to 318 residues: Protein disulfide-isomerase MPD1 (318 aa).

The N-terminal stretch at 1 to 21 is a signal peptide; sequence MLFLNIIKLLLGLFIMNEVKA. Positions 22-158 constitute a Thioredoxin domain; the sequence is QNFYDSDPHI…SLSRIRSYVK (137 aa). Residue N47 is glycosylated (N-linked (GlcNAc...) asparagine). C59 and C62 are disulfide-bonded. A glycan (N-linked (GlcNAc...) asparagine) is linked at N307. Residues 315-318 carry the Prevents secretion from ER motif; it reads HDEL.

It belongs to the protein disulfide isomerase family. In terms of assembly, interacts with CNE1 and EPS1.

The protein resides in the endoplasmic reticulum lumen. The enzyme catalyses Catalyzes the rearrangement of -S-S- bonds in proteins.. Functionally, participates in the folding of proteins containing disulfide bonds. The sequence is that of Protein disulfide-isomerase MPD1 (MPD1) from Saccharomyces cerevisiae (strain ATCC 204508 / S288c) (Baker's yeast).